A 177-amino-acid polypeptide reads, in one-letter code: Embryogenesis-like protein (177 aa).

The stretch at 98–118 (VDEINLKFAEAREEIEMAMDA) forms a coiled coil.

As to quaternary structure, interacts with HAG1/GCN5. In terms of tissue distribution, expressed in flowers, leaves, stems and siliques.

The protein resides in the nucleus. Activates gene expression by recruiting HAG1/GCN5 and triggering subsequent histone H3 acetylation of target genes promoters. In Arabidopsis thaliana (Mouse-ear cress), this protein is Embryogenesis-like protein.